The primary structure comprises 398 residues: NADH-quinone oxidoreductase subunit D (398 aa).

It belongs to the complex I 49 kDa subunit family. As to quaternary structure, NDH-1 is composed of 14 different subunits. Subunits NuoB, C, D, E, F, and G constitute the peripheral sector of the complex.

It localises to the cell inner membrane. It catalyses the reaction a quinone + NADH + 5 H(+)(in) = a quinol + NAD(+) + 4 H(+)(out). In terms of biological role, NDH-1 shuttles electrons from NADH, via FMN and iron-sulfur (Fe-S) centers, to quinones in the respiratory chain. The immediate electron acceptor for the enzyme in this species is believed to be ubiquinone. Couples the redox reaction to proton translocation (for every two electrons transferred, four hydrogen ions are translocated across the cytoplasmic membrane), and thus conserves the redox energy in a proton gradient. This chain is NADH-quinone oxidoreductase subunit D, found in Rhodospirillum centenum (strain ATCC 51521 / SW).